Here is a 61-residue protein sequence, read N- to C-terminus: Small ribosomal subunit protein uS14 (61 aa).

Cys24, Cys27, Cys40, and Cys43 together coordinate Zn(2+).

It belongs to the universal ribosomal protein uS14 family. Zinc-binding uS14 subfamily. In terms of assembly, part of the 30S ribosomal subunit. Contacts proteins S3 and S10. The cofactor is Zn(2+).

Binds 16S rRNA, required for the assembly of 30S particles and may also be responsible for determining the conformation of the 16S rRNA at the A site. This Thermus aquaticus protein is Small ribosomal subunit protein uS14.